The chain runs to 136 residues: Small ribosomal subunit protein uS19 (136 aa).

The protein belongs to the universal ribosomal protein uS19 family.

Its function is as follows. Protein S19 forms a complex with S13 that binds strongly to the 16S ribosomal RNA. The polypeptide is Small ribosomal subunit protein uS19 (Methanocorpusculum labreanum (strain ATCC 43576 / DSM 4855 / Z)).